The following is a 539-amino-acid chain: GMP synthase [glutamine-hydrolyzing] (539 aa).

The 199-residue stretch at 4-202 (KVLILDFGSQ…VLEIAGAKPD (199 aa)) folds into the Glutamine amidotransferase type-1 domain. Cys-81 (nucleophile) is an active-site residue. Active-site residues include His-176 and Glu-178. The GMPS ATP-PPase domain occupies 203–395 (WVMRDHIDEA…LGLPHEMVYR (193 aa)). 230–236 (SGGVDSS) is a binding site for ATP.

In terms of assembly, homodimer.

The enzyme catalyses XMP + L-glutamine + ATP + H2O = GMP + L-glutamate + AMP + diphosphate + 2 H(+). It functions in the pathway purine metabolism; GMP biosynthesis; GMP from XMP (L-Gln route): step 1/1. Its function is as follows. Catalyzes the synthesis of GMP from XMP. In Ralstonia pickettii (strain 12J), this protein is GMP synthase [glutamine-hydrolyzing].